A 440-amino-acid polypeptide reads, in one-letter code: Xaa-Pro dipeptidase (440 aa).

Mn(2+) is bound by residues Asp-244, Asp-255, His-335, Glu-380, and Glu-419.

The protein belongs to the peptidase M24B family. Bacterial-type prolidase subfamily. The cofactor is Mn(2+).

It catalyses the reaction Xaa-L-Pro dipeptide + H2O = an L-alpha-amino acid + L-proline. Its function is as follows. Splits dipeptides with a prolyl residue in the C-terminal position. This Shewanella putrefaciens (strain CN-32 / ATCC BAA-453) protein is Xaa-Pro dipeptidase.